A 1305-amino-acid chain; its full sequence is Myosin-IIIb (1305 aa).

Residues 15–281 (WEIIETIGKG…VTHLLDHPFI (267 aa)) form the Protein kinase domain. ATP is bound by residues 21–29 (IGKGTYGKV) and lysine 44. The Proton acceptor role is filled by aspartate 144. A Myosin motor domain is found at 331–1046 (CLEDDLVNLE…HVEQLNLLLR (716 aa)). Residues 927 to 949 (LMDLLSKMVVGQPHFIRCIKPND) form an actin-binding region. IQ domains are found at residues 1048–1077 (VMGRVVMLQAYTKGWLGARRYKRAKEKREK) and 1075–1104 (REKGAITIQSAWRGYDARRKLKQRSRRRSE). 2 disordered regions span residues 1093–1164 (RKLK…VTSG) and 1200–1233 (SPCEDSLKPGSEEGLSQKQRAPRRRCQQPKMLSS).

This sequence in the C-terminal section; belongs to the TRAFAC class myosin-kinesin ATPase superfamily. Myosin family. In the N-terminal section; belongs to the protein kinase superfamily. STE Ser/Thr protein kinase family. Interacts (via C-terminus) with ESPN. Interacts (via C-terminus) with ESPNL. Expressed in the cochlear hair cells (at protein level). Expressed in utricle hair bundles (at protein level).

Its subcellular location is the cytoplasm. The protein resides in the cytoskeleton. It localises to the cell projection. It is found in the stereocilium. The catalysed reaction is L-seryl-[protein] + ATP = O-phospho-L-seryl-[protein] + ADP + H(+). It catalyses the reaction L-threonyl-[protein] + ATP = O-phospho-L-threonyl-[protein] + ADP + H(+). Its function is as follows. Probable actin-based motor with a protein kinase activity. Required for normal cochlear hair bundle development and hearing. Plays an important role in the early steps of cochlear hair bundle morphogenesis. Influences the number and lengths of stereocilia to be produced and limits the growth of microvilli within the forming auditory hair bundles thereby contributing to the architecture of the hair bundle, including its staircase pattern. Involved in the elongation of actin in stereocilia tips by transporting the actin regulatory factor ESPN to the plus ends of actin filaments. This Mus musculus (Mouse) protein is Myosin-IIIb (Myo3b).